A 366-amino-acid polypeptide reads, in one-letter code: tRNA/tmRNA (uracil-C(5))-methyltransferase (366 aa).

S-adenosyl-L-methionine is bound by residues Q190, Y218, N223, E239, and D299. C324 functions as the Nucleophile in the catalytic mechanism. Catalysis depends on E358, which acts as the Proton acceptor.

This sequence belongs to the class I-like SAM-binding methyltransferase superfamily. RNA M5U methyltransferase family. TrmA subfamily.

The enzyme catalyses uridine(54) in tRNA + S-adenosyl-L-methionine = 5-methyluridine(54) in tRNA + S-adenosyl-L-homocysteine + H(+). It catalyses the reaction uridine(341) in tmRNA + S-adenosyl-L-methionine = 5-methyluridine(341) in tmRNA + S-adenosyl-L-homocysteine + H(+). Its function is as follows. Dual-specificity methyltransferase that catalyzes the formation of 5-methyluridine at position 54 (m5U54) in all tRNAs, and that of position 341 (m5U341) in tmRNA (transfer-mRNA). The protein is tRNA/tmRNA (uracil-C(5))-methyltransferase of Salmonella arizonae (strain ATCC BAA-731 / CDC346-86 / RSK2980).